Here is a 415-residue protein sequence, read N- to C-terminus: [Pyruvate dehydrogenase (acetyl-transferring)] kinase isozyme 3, mitochondrial (415 aa).

A Histidine kinase domain is found at 131 to 362 (IEYKEKFGFD…DAVIYLKALS (232 aa)). ATP is bound at residue 247 to 254 (ELFKNSMR). Lysine 278 is subject to N6-succinyllysine. ATP contacts are provided by residues aspartate 287, 306 to 307 (ST), and 323 to 328 (GFGYGL). The interval 383–415 (TPEADDWSNPSSEPRDASKYKAKQDKIKSNRTF) is disordered. Positions 395–415 (EPRDASKYKAKQDKIKSNRTF) are enriched in basic and acidic residues.

Belongs to the PDK/BCKDK protein kinase family. Homodimer. Interacts with the pyruvate dehydrogenase complex subunit DLAT, and is part of the multimeric pyruvate dehydrogenase complex that contains multiple copies of pyruvate dehydrogenase (E1), dihydrolipoamide acetyltransferase (DLAT, E2) and lipoamide dehydrogenase (DLD, E3).

The protein localises to the mitochondrion matrix. The catalysed reaction is L-seryl-[pyruvate dehydrogenase E1 alpha subunit] + ATP = O-phospho-L-seryl-[pyruvate dehydrogenase E1 alpha subunit] + ADP + H(+). Inhibits pyruvate dehydrogenase activity by phosphorylation of the E1 subunit PDHA1, and thereby regulates glucose metabolism and aerobic respiration. Can also phosphorylate PDHA2. Decreases glucose utilization and increases fat metabolism in response to prolonged fasting, and as adaptation to a high-fat diet. Plays a role in glucose homeostasis and in maintaining normal blood glucose levels in function of nutrient levels and under starvation. Plays a role in the generation of reactive oxygen species. This Mus musculus (Mouse) protein is [Pyruvate dehydrogenase (acetyl-transferring)] kinase isozyme 3, mitochondrial (Pdk3).